The primary structure comprises 213 residues: GTP cyclohydrolase 1 (213 aa).

Zn(2+) is bound by residues cysteine 104, histidine 107, and cysteine 175.

This sequence belongs to the GTP cyclohydrolase I family. In terms of assembly, homomer.

It carries out the reaction GTP + H2O = 7,8-dihydroneopterin 3'-triphosphate + formate + H(+). It functions in the pathway cofactor biosynthesis; 7,8-dihydroneopterin triphosphate biosynthesis; 7,8-dihydroneopterin triphosphate from GTP: step 1/1. This Brucella suis (strain ATCC 23445 / NCTC 10510) protein is GTP cyclohydrolase 1.